We begin with the raw amino-acid sequence, 216 residues long: Probable RNA 2'-phosphotransferase 1 (216 aa).

Belongs to the KptA/TPT1 family.

Functionally, removes the 2'-phosphate from RNA via an intermediate in which the phosphate is ADP-ribosylated by NAD followed by a presumed transesterification to release the RNA and generate ADP-ribose 1''-2''-cyclic phosphate (APPR&gt;P). May function as an ADP-ribosylase. This chain is Probable RNA 2'-phosphotransferase 1 (kptA1), found in Archaeoglobus fulgidus (strain ATCC 49558 / DSM 4304 / JCM 9628 / NBRC 100126 / VC-16).